A 613-amino-acid chain; its full sequence is MPKYRSATTTHGRNMAGARALWRATGVKDEDFGKPIIAVVNSFTQFVPGHVHLKDLGQLVAREIEAAGGIAKEFNTIAVDDGIAMGHGGMLYSLPSRELIADSVEYMVNAHCADAMVCISNCDKITPGMLMASMRLNIPVIFVSGGPMEAGKTKLSDQIIKLDLVDAMIQGADPKVSDEQSEQIERSACPTCGSCSGMFTANSMNCLTEALGLSQPGNGSLLATHADRKQLFISAGQRIVELTKRYYEQDDESALPRNIATKAAFENAMALDIAMGGSTNTVLHLLAAAQEGEVDFDMTDIDRMSRMVPHLCKVAPSTQKYHMEDVHRAGGVVGILGELNRAGLLHNQSKTVLGLTWEEQLAQYDIMLTDSEEVKRFYRAGPAGIRTTQAFSQDCRWDTLDDDRAQGCIRTKENAFSQDGGLAVLKGNIALDGCIVKTAGVDESILKFTGPAVVFESQEDAVEGILGGKVKAGDVVVIRYEGPKGGPGMQEMLYPTTYLKSMGLGKACALLTDGRFSGGTSGLSIGHASPEAANGGAIGLVKQGDLIAIDIPNRTISLQVSEQEMAERRAEQDALGWKPVSRQREVSFALKAYASMATSADKGAVRDKSKLEG.

Mg(2+) is bound at residue D81. Residue C122 coordinates [2Fe-2S] cluster. Mg(2+)-binding residues include D123 and K124. The residue at position 124 (K124) is an N6-carboxylysine. [2Fe-2S] cluster is bound at residue C195. Residue E491 coordinates Mg(2+). The active-site Proton acceptor is the S517.

Belongs to the IlvD/Edd family. In terms of assembly, homodimer. The cofactor is [2Fe-2S] cluster. Requires Mg(2+) as cofactor.

It carries out the reaction (2R)-2,3-dihydroxy-3-methylbutanoate = 3-methyl-2-oxobutanoate + H2O. The enzyme catalyses (2R,3R)-2,3-dihydroxy-3-methylpentanoate = (S)-3-methyl-2-oxopentanoate + H2O. Its pathway is amino-acid biosynthesis; L-isoleucine biosynthesis; L-isoleucine from 2-oxobutanoate: step 3/4. The protein operates within amino-acid biosynthesis; L-valine biosynthesis; L-valine from pyruvate: step 3/4. Its function is as follows. Functions in the biosynthesis of branched-chain amino acids. Catalyzes the dehydration of (2R,3R)-2,3-dihydroxy-3-methylpentanoate (2,3-dihydroxy-3-methylvalerate) into 2-oxo-3-methylpentanoate (2-oxo-3-methylvalerate) and of (2R)-2,3-dihydroxy-3-methylbutanoate (2,3-dihydroxyisovalerate) into 2-oxo-3-methylbutanoate (2-oxoisovalerate), the penultimate precursor to L-isoleucine and L-valine, respectively. This chain is Dihydroxy-acid dehydratase, found in Vibrio vulnificus (strain YJ016).